A 682-amino-acid chain; its full sequence is Serine/threonine-protein kinase PLK2 (682 aa).

Positions 25 to 67 are disordered; sequence ACGGDSKKKRPQQPSEDGQSQAQVTPAAPHHHHHHSHSGPEIS. The segment covering 36–48 has biased composition (polar residues); that stretch reads QQPSEDGQSQAQV. One can recognise a Protein kinase domain in the interval 79–331; sequence YCRGKVLGKG…LDDIIRHDFF (253 aa). ATP contacts are provided by residues 85 to 93 and lysine 108; that span reads LGKGGFAKC. Aspartate 202 (proton acceptor) is an active-site residue. At threonine 236 the chain carries Phosphothreonine. A disordered region spans residues 402–430; it reads TSITQQPSKHRTDEELQPPPTTFAKSGTS. 2 POLO box domains span residues 500–578 and 598–682; these read WVTK…YMEE and YLLQ…QRCN.

It belongs to the protein kinase superfamily. Ser/Thr protein kinase family. CDC5/Polo subfamily. Interacts with CIB1. Interacts with NSF; causing NSF dissociation from GRIA2. Catalytic activity is enhanced by phosphorylation of Thr-236.

The protein localises to the cytoplasm. Its subcellular location is the cytoskeleton. It localises to the microtubule organizing center. It is found in the centrosome. The protein resides in the centriole. The protein localises to the cell projection. Its subcellular location is the dendrite. The catalysed reaction is L-seryl-[protein] + ATP = O-phospho-L-seryl-[protein] + ADP + H(+). It carries out the reaction L-threonyl-[protein] + ATP = O-phospho-L-threonyl-[protein] + ADP + H(+). Activated by phosphorylation of Thr-236. Once activated, activity is stimulated by binding target proteins. Functionally, tumor suppressor serine/threonine-protein kinase involved in synaptic plasticity, centriole duplication and G1/S phase transition. Polo-like kinases act by binding and phosphorylating proteins that are already phosphorylated on a specific motif recognized by the POLO box domains. Phosphorylates CPAP, NPM1, RAPGEF2, RASGRF1, SNCA, SIPA1L1 and SYNGAP1. Plays a key role in synaptic plasticity and memory by regulating the Ras and Rap protein signaling: required for overactivity-dependent spine remodeling by phosphorylating the Ras activator RASGRF1 and the Rap inhibitor SIPA1L1 leading to their degradation by the proteasome. Conversely, phosphorylates the Rap activator RAPGEF2 and the Ras inhibitor SYNGAP1, promoting their activity. Also regulates synaptic plasticity independently of kinase activity, via its interaction with NSF that disrupts the interaction between NSF and the GRIA2 subunit of AMPARs, leading to a rapid rundown of AMPAR-mediated current that occludes long term depression. Required for procentriole formation and centriole duplication by phosphorylating CPAP and NPM1, respectively. Its induction by p53/TP53 suggests that it may participate in the mitotic checkpoint following stress. The sequence is that of Serine/threonine-protein kinase PLK2 (Plk2) from Rattus norvegicus (Rat).